A 264-amino-acid chain; its full sequence is S-adenosylmethionine decarboxylase proenzyme (264 aa).

The Schiff-base intermediate with substrate; via pyruvic acid role is filled by serine 113. Position 113 is a pyruvic acid (Ser); by autocatalysis (serine 113). Histidine 118 serves as the catalytic Proton acceptor; for processing activity. The active-site Proton donor; for catalytic activity is the cysteine 141.

Belongs to the prokaryotic AdoMetDC family. Type 2 subfamily. Heterooctamer of four alpha and four beta chains arranged as a tetramer of alpha/beta heterodimers. The cofactor is pyruvate. In terms of processing, is synthesized initially as an inactive proenzyme. Formation of the active enzyme involves a self-maturation process in which the active site pyruvoyl group is generated from an internal serine residue via an autocatalytic post-translational modification. Two non-identical subunits are generated from the proenzyme in this reaction, and the pyruvate is formed at the N-terminus of the alpha chain, which is derived from the carboxyl end of the proenzyme. The post-translation cleavage follows an unusual pathway, termed non-hydrolytic serinolysis, in which the side chain hydroxyl group of the serine supplies its oxygen atom to form the C-terminus of the beta chain, while the remainder of the serine residue undergoes an oxidative deamination to produce ammonia and the pyruvoyl group blocking the N-terminus of the alpha chain.

It carries out the reaction S-adenosyl-L-methionine + H(+) = S-adenosyl 3-(methylsulfanyl)propylamine + CO2. Its pathway is amine and polyamine biosynthesis; S-adenosylmethioninamine biosynthesis; S-adenosylmethioninamine from S-adenosyl-L-methionine: step 1/1. In terms of biological role, catalyzes the decarboxylation of S-adenosylmethionine to S-adenosylmethioninamine (dcAdoMet), the propylamine donor required for the synthesis of the polyamines spermine and spermidine from the diamine putrescine. This chain is S-adenosylmethionine decarboxylase proenzyme, found in Stenotrophomonas maltophilia (strain R551-3).